The primary structure comprises 506 residues: Ent-kaurenoic acid oxidase (506 aa).

A helical transmembrane segment spans residues Ala11–Val31. A heme-binding site is contributed by Cys451.

This sequence belongs to the cytochrome P450 family. Heme is required as a cofactor. Expressed in roots and panicles. Expressed at low levels in vegetative shoot apices, leaf sheaths, leaf blades and stems.

Its subcellular location is the endoplasmic reticulum membrane. The enzyme catalyses ent-kaur-16-en-19-oate + 3 reduced [NADPH--hemoprotein reductase] + 3 O2 = gibberellin A12 + 3 oxidized [NADPH--hemoprotein reductase] + 4 H2O + 4 H(+). The catalysed reaction is ent-kaur-16-en-19-oate + reduced [NADPH--hemoprotein reductase] + O2 = ent-7alpha-hydroxykaur-16-en-19-oate + oxidized [NADPH--hemoprotein reductase] + H2O + H(+). It catalyses the reaction ent-7alpha-hydroxykaur-16-en-19-oate + reduced [NADPH--hemoprotein reductase] + O2 = gibberellin A12 aldehyde + oxidized [NADPH--hemoprotein reductase] + 2 H2O + H(+). It carries out the reaction gibberellin A12 aldehyde + reduced [NADPH--hemoprotein reductase] + O2 = gibberellin A12 + oxidized [NADPH--hemoprotein reductase] + H2O + 2 H(+). It functions in the pathway plant hormone biosynthesis; gibberellin biosynthesis. Functionally, involved in gibberellin (GA) biosynthesis. Catalyzes three successive oxidations of ent-kaurenoic acid giving gibberellin 12 (GA12), a key step in GAs biosynthesis. GAs, which are involved many processes, including stem elongation, play a central role in plant development. Required for pollen germination and elongation. In Oryza sativa subsp. japonica (Rice), this protein is Ent-kaurenoic acid oxidase.